A 79-amino-acid chain; its full sequence is CATR tumorigenic conversion 1 protein (79 aa).

The sequence is that of CATR tumorigenic conversion 1 protein (CATR1) from Homo sapiens (Human).